The sequence spans 1136 residues: MADQIPLYPVRSAAAVAAANRKRAAYFSSAGPGPGADRPSRYQLEDESAHLDEMPLMMSEEGFENDESDYHTLPRARITRRKRGLEWFVCGGWKFLCTSCCDWLINICQRKRELKARTVWLGCPEKCEEKHPRNSIKNQKYNIFTFIPGVLYEQFKFFLNLYFLIVSCSQFVPALKIGYLYTYWAPLGFVLAVTIMREAVDEFRRFQRDKEVNSQLYSKLTVRGKVQVKSSDIQVGDLIIVEKNQRIPSDMVFLRTSEKAGSCFIRTDQLDGETDWKLKVAVSCTQRLPALGDLFSINAYVYAQKPQLDIHSFEGTFTREDSDPPVHESLSIENTLWASTVVASGTVIGVVIYTGKETRSVMNTSNPKNKVGLLDLELNQLTKALFLALVALSVVMVTLQGFAGPWYRSLFRFLLLFSYIIPISLRVNLDMGKAAYGWMIMRDEHIPGTVVRTSTIPEELGRLVYLLTDKTGTLTQNEMVFKRLHLGTVSYGTDTMDEIQNHLVNAYTQTQCQAGGSSAASTPPRKAPSSAPKVRRSVSSRVHEAVKAVALCHNVTPVYEARGAAGETEVAEADQDFSDDNRTYQASSPDEVALVQWTESVGLTLVSRDLTSMQLRTPGGQILTYCILQTFPFTSESKRMGVIVRDESTAEITFYMKGADVAMASIVQYNDWLEEECGNMAREGLRTLVVAKRALTEEQYQDFESRYNQAKLSLHDRTLKVAAVVESLEREMELLCLTGVEDQLQADVRPTLEMLRNAGIKIWMLTGDKLETATCIAKSSHLVSRTQDTHVFRPVTSRGEAHLELNAFRRKHDCALVISGDSLEVCLKYYEHEFVELACQCPAVVCCRCSPTQKAHIVKLLQQHTGRRTCAIGDGGNDVSMIQAADCGIGIEGKEGRQASLAADFSITRFKHVGRLLMVHGRSSYKRSAALGQFVMHRGLIISTMQAVFSSVFYFASVPLYQGFLMVGYATVYTMFPVFSLVLDQDVKPEMAMLYPELYKDLTKGRSLSFKTFLVWVLISIYQGGILMFGALVLFESEFVHVVAISFTALVLTELLMVALTVRTWHWLMVVAQLLSLGCYVASLAFLNEYFDVAFITTVTFVWKVSAITVVSCLPLYVLKYLKRKLSPPSYSKLSS.

Residues 1-145 (MADQIPLYPV…IKNQKYNIFT (145 aa)) are Cytoplasmic-facing. The helical transmembrane segment at 146–166 (FIPGVLYEQFKFFLNLYFLIV) threads the bilayer. Residues 167-174 (SCSQFVPA) are Extracellular-facing. A helical membrane pass occupies residues 175–195 (LKIGYLYTYWAPLGFVLAVTI). Residues 196–383 (MREAVDEFRR…LDLELNQLTK (188 aa)) lie on the Cytoplasmic side of the membrane. Residues 384–404 (ALFLALVALSVVMVTLQGFAG) form a helical membrane-spanning segment. The Extracellular segment spans residues 405-408 (PWYR). The chain crosses the membrane as a helical span at residues 409–429 (SLFRFLLLFSYIIPISLRVNL). At 430–939 (DMGKAAYGWM…ALGQFVMHRG (510 aa)) the chain is on the cytoplasmic side. Residue aspartate 469 is the 4-aspartylphosphate intermediate of the active site. Aspartate 469, lysine 470, and threonine 471 together coordinate ATP. Residue aspartate 469 coordinates Mg(2+). Residue threonine 471 coordinates Mg(2+). The disordered stretch occupies residues 514–538 (AGGSSAASTPPRKAPSSAPKVRRSV). 11 residues coordinate ATP: glutamate 591, phenylalanine 633, lysine 638, lysine 657, arginine 686, threonine 687, threonine 766, glycine 767, aspartate 768, arginine 848, and lysine 854. Position 874 (aspartate 874) interacts with Mg(2+). ATP is bound by residues asparagine 877 and aspartate 878. Residue aspartate 878 coordinates Mg(2+). A helical membrane pass occupies residues 940-960 (LIISTMQAVFSSVFYFASVPL). The Extracellular segment spans residues 961-962 (YQ). A helical transmembrane segment spans residues 963 to 983 (GFLMVGYATVYTMFPVFSLVL). Residues 984–1012 (DQDVKPEMAMLYPELYKDLTKGRSLSFKT) lie on the Cytoplasmic side of the membrane. A helical membrane pass occupies residues 1013-1033 (FLVWVLISIYQGGILMFGALV). The Extracellular portion of the chain corresponds to 1034–1041 (LFESEFVH). A helical transmembrane segment spans residues 1042-1062 (VVAISFTALVLTELLMVALTV). At 1063 to 1066 (RTWH) the chain is on the cytoplasmic side. The helical transmembrane segment at 1067–1087 (WLMVVAQLLSLGCYVASLAFL) threads the bilayer. Residues 1088–1098 (NEYFDVAFITT) lie on the Extracellular side of the membrane. A helical membrane pass occupies residues 1099-1119 (VTFVWKVSAITVVSCLPLYVL). Residues 1120 to 1136 (KYLKRKLSPPSYSKLSS) are Cytoplasmic-facing.

Belongs to the cation transport ATPase (P-type) (TC 3.A.3) family. Type IV subfamily. Requires Mg(2+) as cofactor.

It localises to the golgi apparatus. The protein resides in the trans-Golgi network membrane. It carries out the reaction ATP + H2O + phospholipidSide 1 = ADP + phosphate + phospholipidSide 2.. This chain is Probable phospholipid-transporting ATPase IIB (ATP9B), found in Bos taurus (Bovine).